A 257-amino-acid chain; its full sequence is Zinc transporter ZupT (257 aa).

The next 8 helical transmembrane spans lie at 5–25 (LILT…GVLG), 32–52 (LLAF…LMEM), 61–81 (GMSP…YLGL), 109–129 (AILL…ATFV), 137–157 (LGFG…LAVV), 171–191 (ILWA…AWLI), 195–215 (MISP…MVAL), and 236–256 (GVLC…TAGI). The Fe(2+) site is built by N120 and E123. The Zn(2+) site is built by E123 and H148. Residues N149, E152, and E181 each coordinate Fe(2+). E152 lines the Zn(2+) pocket.

Belongs to the ZIP transporter (TC 2.A.5) family. ZupT subfamily.

The protein localises to the cell inner membrane. The catalysed reaction is Zn(2+)(in) = Zn(2+)(out). Functionally, mediates zinc uptake. May also transport other divalent cations. The polypeptide is Zinc transporter ZupT (Shigella dysenteriae serotype 1 (strain Sd197)).